The sequence spans 1558 residues: ABC transporter NFT1 (1558 aa).

The Extracellular segment spans residues 1-29 (MIKNGTCPFWERDDLSECARREYIEFKFP). N-linked (GlcNAc...) asparagine glycosylation occurs at N4. Residues 30–50 (LFILLTGMIYAFCKVFRAFYL) traverse the membrane as a helical segment. The Cytoplasmic segment spans residues 51 to 103 (RRKNHTNEAPEFEEQGNGNHEYARFSVLRLKSAWESRSFCNVNNRSTFDKFKK). Residues 104-124 (FIEGAFIVLQLTIHLYILSNM) traverse the membrane as a helical segment. Over 125 to 130 (PMDNKK) the chain is Extracellular. A helical transmembrane segment spans residues 131–151 (FFHQGFLVQMFLWILLLVVIT). The Cytoplasmic segment spans residues 152-169 (LRLISASQSFRWVLACKR). The helical transmembrane segment at 170–190 (DLWAVSFYSYASLFTLSILPL) threads the bilayer. Over 191–201 (RSVFIGKIKDK) the chain is Extracellular. A helical membrane pass occupies residues 202-222 (IMVKYIISETFIDLALLLLLS). The Cytoplasmic portion of the chain corresponds to 223–302 (TSSIEGTRYS…SSKKGRLLPN (80 aa)). The helical transmembrane segment at 303–323 (IICYFKAVFISQLFLAFVSSF) threads the bilayer. The region spanning 311–621 (FISQLFLAFV…IASTVSLLIQ (311 aa)) is the ABC transmembrane type-1 1 domain. Residues 324–351 (LNFVPSLLMPRILSYVNDPKSQSWNLVS) lie on the Extracellular side of the membrane. The chain crosses the membrane as a helical span at residues 352-374 (LYVSSMLVSKIIATTCRGQGLFL). The Cytoplasmic segment spans residues 375–449 (GEKGTMQLRT…VMSIDAFKVS (75 aa)). Residues 410–434 (NASTSFEENPDSSEAEPRKKSSRKD) are disordered. A compositionally biased stretch (basic and acidic residues) spans 424–434 (AEPRKKSSRKD). Residues 450–470 (EAMNTFYLACEAVFMTVTALM) traverse the membrane as a helical segment. Residues 471–481 (ILYSLLGWSAF) lie on the Extracellular side of the membrane. Residues 482–504 (AGTFALLAMIPLNFWCATFYGNY) form a helical membrane-spanning segment. Over 505–558 (QADQLILTDKRTSGISEALNSIRVIKLLAWENLFYQKIINVRDGEIRLLKKKAT) the chain is Cytoplasmic. The chain crosses the membrane as a helical span at residues 559–579 (IFFLNHLIWFFGPTLVSAITF). The Extracellular portion of the chain corresponds to 580 to 584 (SVFIK). The chain crosses the membrane as a helical span at residues 585–605 (FQNQTLTPTIAFTALSLFAIL). The Cytoplasmic segment spans residues 606 to 953 (RTPMDQIAST…KFSAYKWLAD (348 aa)). The region spanning 651–892 (FGFEDASMEW…NEFLRESINN (242 aa)) is the ABC transporter 1 domain. 686–693 (GPTGSGKS) contacts ATP. Residues 892-901 (NDSKNTTHNQ) are compositionally biased toward polar residues. A disordered region spans residues 892-926 (NDSKNTTHNQIDLKRSTTSKKTKNGDPEGENSQDE). Residues 954-974 (YFGGLGVVFVFTSSAILIHGI) traverse the membrane as a helical segment. Residues 961–1251 (VFVFTSSAIL…IIKVFSSVEL (291 aa)) form the ABC transmembrane type-1 2 domain. At 975–1013 (TLSQGFWLRYWLETGSSGSKSTWLYRIVEGHSNIYFILT) the chain is on the extracellular side. Residues 1014–1034 (YIVIGFVSSFLTSGKVWIAII) traverse the membrane as a helical segment. Residues 1035–1082 (SGTNVTKKIFAKLLSSILYAKLRFHNVTPTGRIMNRFSKDMDIIDQQL) are Cytoplasmic-facing. The helical transmembrane segment at 1083 to 1105 (IPNFEGLSYSVVVCLWIILLIGY) threads the bilayer. At 1106-1109 (VTPQ) the chain is on the extracellular side. A helical membrane pass occupies residues 1110–1132 (FLLFAIPLCALYYTVCTLYLRAS). The Cytoplasmic portion of the chain corresponds to 1133-1199 (RELKRIDNIN…ATEWITYRVD (67 aa)). A helical transmembrane segment spans residues 1200-1220 (IIGTLVLFSSSVMIIMKASYL). Residues 1221–1222 (DA) are Extracellular-facing. A helical transmembrane segment spans residues 1223 to 1243 (GLAGILLSNAFSFTETAQWII). The Cytoplasmic portion of the chain corresponds to 1244 to 1558 (KVFSSVELLM…LAKVSFDNKR (315 aa)). Residues 1285–1538 (VELKNLSLRY…RNTIFYRLCR (254 aa)) enclose the ABC transporter 2 domain. An ATP-binding site is contributed by 1319 to 1326 (GRTGAGKS).

It belongs to the ABC transporter superfamily. ABCC family. Conjugate transporter (TC 3.A.1.208) subfamily.

It is found in the membrane. This Saccharomyces cerevisiae (strain YJM789) (Baker's yeast) protein is ABC transporter NFT1 (NFT1).